The chain runs to 693 residues: Serine/threonine-protein kinase Pkn1 (693 aa).

The 270-residue stretch at 59 to 328 folds into the Protein kinase domain; the sequence is FRLVRRLGRG…QVALAEHVRV (270 aa). ATP contacts are provided by residues 65–73 and Lys-88; that span reads LGRGGMGAV. Catalysis depends on Asp-180, which acts as the Proton acceptor. The region spanning 393 to 491 is the PilZ domain; it reads LVEVPVQVVL…LKAAVDALLQ (99 aa). A TPR repeat occupies 630 to 663; the sequence is ARSHFQSGGALERDGQLSQALDQYERGLKLAPLE.

It belongs to the protein kinase superfamily. Ser/Thr protein kinase family. In terms of processing, autophosphorylated.

It catalyses the reaction L-seryl-[protein] + ATP = O-phospho-L-seryl-[protein] + ADP + H(+). The enzyme catalyses L-threonyl-[protein] + ATP = O-phospho-L-threonyl-[protein] + ADP + H(+). May be regulated by calcium or a calmodulin-like protein. Functionally, plays an essential role in proper timing of early development events. This Myxococcus xanthus protein is Serine/threonine-protein kinase Pkn1 (pkn1).